Consider the following 258-residue polypeptide: Mitochondrial distribution and morphology protein 12 (258 aa).

The SMP-LTD domain occupies 1 to 233 (MSFDIHWSNL…WPSWIELDFN (233 aa)). Positions 238–258 (EDLQQSKDTPTTANTGTTTTN) are disordered. Over residues 246-258 (TPTTANTGTTTTN) the composition is skewed to low complexity.

It belongs to the MDM12 family. Component of the ER-mitochondria encounter structure (ERMES) or MDM complex, composed of MMM1, MDM10, MDM12 and MDM34. An MMM1 homodimer associates with one molecule of MDM12 on each side in a pairwise head-to-tail manner, and the SMP-LTD domains of MMM1 and MDM12 generate a continuous hydrophobic tunnel for phospholipid trafficking.

Its subcellular location is the mitochondrion outer membrane. The protein resides in the endoplasmic reticulum membrane. In terms of biological role, component of the ERMES/MDM complex, which serves as a molecular tether to connect the endoplasmic reticulum (ER) and mitochondria. Components of this complex are involved in the control of mitochondrial shape and protein biogenesis, and function in nonvesicular lipid trafficking between the ER and mitochondria. MDM12 is required for the interaction of the ER-resident membrane protein MMM1 and the outer mitochondrial membrane-resident beta-barrel protein MDM10. The MDM12-MMM1 subcomplex functions in the major beta-barrel assembly pathway that is responsible for biogenesis of all mitochondrial outer membrane beta-barrel proteins, and acts in a late step after the SAM complex. The MDM10-MDM12-MMM1 subcomplex further acts in the TOM40-specific pathway after the action of the MDM12-MMM1 complex. Essential for establishing and maintaining the structure of mitochondria and maintenance of mtDNA nucleoids. The chain is Mitochondrial distribution and morphology protein 12 from Zygosaccharomyces rouxii (strain ATCC 2623 / CBS 732 / NBRC 1130 / NCYC 568 / NRRL Y-229).